The primary structure comprises 111 residues: Urease subunit beta (111 aa).

This sequence belongs to the urease beta subunit family. In terms of assembly, heterotrimer of UreA (gamma), UreB (beta) and UreC (alpha) subunits. Three heterotrimers associate to form the active enzyme.

It localises to the cytoplasm. The catalysed reaction is urea + 2 H2O + H(+) = hydrogencarbonate + 2 NH4(+). Its pathway is nitrogen metabolism; urea degradation; CO(2) and NH(3) from urea (urease route): step 1/1. The sequence is that of Urease subunit beta from Psychrobacter cryohalolentis (strain ATCC BAA-1226 / DSM 17306 / VKM B-2378 / K5).